Reading from the N-terminus, the 299-residue chain is ClpXP adapter protein SpxH (299 aa).

This sequence belongs to the SpxH family. Interacts with Spx. Interacts with SpxO/YuzO.

The protein localises to the cytoplasm. Its activity is regulated as follows. Irreversible aggregation upon several stress conditions prevents interaction with Spx and therefore leads to Spx stabilization. Inhibited by interaction with SpxO/YuzO. Adapter protein required for efficient degradation of Spx by ClpXP under non-stress conditions. Interaction with Spx stabilizes Spx and exposes the C-terminus of Spx for recognition and proteolysis by ClpXP. Is specific for Spx and does not enhance proteolysis by ClpCP protease. Probably binds 2 zinc ions. The polypeptide is ClpXP adapter protein SpxH (Bacillus subtilis (strain 168)).